We begin with the raw amino-acid sequence, 239 residues long: uncharacterized protein (239 aa).

A dksA C4-type; degenerate zinc finger spans residues 94 to 114 (CEVSGKEIPFERLEALPTATT). The segment covering 133 to 158 (ETPFGQFEFDDDEEIRAPYDSEDSYQ) has biased composition (acidic residues). The segment at 133-182 (ETPFGQFEFDDDEEIRAPYDSEDSYQDVEKYGNSQTPQDMENPPLSYDDM) is disordered.

This is an uncharacterized protein from Bacillus subtilis (strain 168).